We begin with the raw amino-acid sequence, 464 residues long: Ribulose bisphosphate carboxylase/oxygenase activase A, chloroplastic (464 aa).

A chloroplast-targeting transit peptide spans M1–A48. G155 to S162 contacts ATP.

This sequence belongs to the RuBisCO activase family.

The protein resides in the plastid. It is found in the chloroplast stroma. Functionally, activation of RuBisCO (ribulose-1,5-bisphosphate carboxylase/oxygenase; EC 4.1.1.39) involves the ATP-dependent carboxylation of the epsilon-amino group of lysine leading to a carbamate structure. This is Ribulose bisphosphate carboxylase/oxygenase activase A, chloroplastic (RCAA) from Hordeum vulgare (Barley).